The sequence spans 399 residues: Phosphoglycerate kinase (399 aa).

Residues 20-22 (DFN), Arg35, 58-61 (HLGR), Arg117, and Arg154 contribute to the substrate site. ATP is bound by residues Lys204, Gly295, Glu326, and 355-358 (GGDS).

The protein belongs to the phosphoglycerate kinase family. As to quaternary structure, monomer.

Its subcellular location is the cytoplasm. The enzyme catalyses (2R)-3-phosphoglycerate + ATP = (2R)-3-phospho-glyceroyl phosphate + ADP. The protein operates within carbohydrate degradation; glycolysis; pyruvate from D-glyceraldehyde 3-phosphate: step 2/5. The polypeptide is Phosphoglycerate kinase (Beutenbergia cavernae (strain ATCC BAA-8 / DSM 12333 / CCUG 43141 / JCM 11478 / NBRC 16432 / NCIMB 13614 / HKI 0122)).